Here is a 309-residue protein sequence, read N- to C-terminus: High-affinity zinc uptake system protein AztC (309 aa).

The first 24 residues, 1 to 24 (MKDWLFRIATCSIMTFSSLAAAQA), serve as a signal peptide directing secretion. Histidine 61 serves as a coordination point for Zn(2+). The tract at residues 117-132 (GGGHYHYIDGKAVFHA) is D-loop. Histidine 138 lines the Zn(2+) pocket. A disulfide bridge connects residues cysteine 158 and cysteine 165. Histidine 204 is a binding site for Zn(2+). Residues 222–229 (QGVSTESE) are Z-loop. Position 279 (aspartate 279) interacts with Zn(2+).

This sequence belongs to the bacterial solute-binding protein 9 family. Monomer.

Its subcellular location is the periplasm. Functionally, part of the ATP-binding cassette (ABC) transport system AztABCD involved in zinc import. Binds zinc with high affinity and specificity and delivers it to the membrane permease for translocation into the cytoplasm. This chain is High-affinity zinc uptake system protein AztC, found in Paracoccus denitrificans (strain Pd 1222).